A 138-amino-acid chain; its full sequence is Acidic phospholipase A2 6 (138 aa).

Residues 1–16 (MRTLWIMAVLLVGVEG) form the signal peptide. Intrachain disulfides connect Cys-42–Cys-131, Cys-44–Cys-60, Cys-59–Cys-111, Cys-65–Cys-138, Cys-66–Cys-104, Cys-73–Cys-97, and Cys-91–Cys-102. Ca(2+) is bound by residues Tyr-43, Gly-45, and Gly-47. His-63 is a catalytic residue. Asp-64 is a binding site for Ca(2+). Asp-105 is an active-site residue.

This sequence belongs to the phospholipase A2 family. Group II subfamily. D49 sub-subfamily. As to quaternary structure, homodimer. Requires Ca(2+) as cofactor. As to expression, expressed by the venom gland.

It localises to the secreted. It carries out the reaction a 1,2-diacyl-sn-glycero-3-phosphocholine + H2O = a 1-acyl-sn-glycero-3-phosphocholine + a fatty acid + H(+). Functionally, snake venom phospholipase A2 (PLA2) that has high lipolytic activity. PLA2 catalyzes the calcium-dependent hydrolysis of the 2-acyl groups in 3-sn-phosphoglycerides. The chain is Acidic phospholipase A2 6 from Craspedocephalus gramineus (Bamboo pit viper).